The following is a 56-amino-acid chain: Large ribosomal subunit protein bL32B (56 aa).

The span at 1 to 19 shows a compositional bias: basic residues; it reads MAVPKRRMSRSNTRHRRAQ. The segment at 1-22 is disordered; the sequence is MAVPKRRMSRSNTRHRRAQWKA.

Belongs to the bacterial ribosomal protein bL32 family.

The protein is Large ribosomal subunit protein bL32B (rpmF2) of Streptomyces coelicolor (strain ATCC BAA-471 / A3(2) / M145).